The following is a 98-amino-acid chain: Large ribosomal subunit protein bL21 (98 aa).

The protein belongs to the bacterial ribosomal protein bL21 family. In terms of assembly, part of the 50S ribosomal subunit. Contacts protein L20.

Functionally, this protein binds to 23S rRNA in the presence of protein L20. The protein is Large ribosomal subunit protein bL21 of Chloroherpeton thalassium (strain ATCC 35110 / GB-78).